The primary structure comprises 420 residues: MKYSLLRGMQDIFSEQIYLWQHIEEHARKILENYNFQEIRTPIVENAELFLRSIGEDTDIVEKEMYVFQDKKGRKVALRPEGTASVVRAYIQHNFFNNPPPQKFYYIGPMFRYERPQKGRFRQFHQIGVECFGVSSSWIDAELIYMLKLFLEKLNINNLTYEINSLGCKRCRPQYRKVLFSFLADKVNQLCIDCKRRFEKNPLRVLDCKVPSCKESLKNTPLIVDFLCQDCKEHFLSLQKELDEMNISYAVNPKIVRGLDYYTRTVFEVTTTMLGAQNAVAAGGRYDDLVELFGGPTTPAAGFAIGMERLIEICSNSLLIKPKKPFVYVAYIGSSVEKEAKKVVNFLRNNNIPTETAYEKLSLKSQLRKADRVGANIVIIIGEDEIKKSVYIWKNMKDGSQGEASLNELLELIRRKYDTE.

This sequence belongs to the class-II aminoacyl-tRNA synthetase family. As to quaternary structure, homodimer.

Its subcellular location is the cytoplasm. The enzyme catalyses tRNA(His) + L-histidine + ATP = L-histidyl-tRNA(His) + AMP + diphosphate + H(+). In Thermodesulfovibrio yellowstonii (strain ATCC 51303 / DSM 11347 / YP87), this protein is Histidine--tRNA ligase.